The primary structure comprises 569 residues: Dihydroorotate dehydrogenase (quinone), mitochondrial (569 aa).

Residues 1–23 (MISKLKPQFMFLPKKHILSYCRK) constitute a mitochondrion transit peptide. A helical membrane pass occupies residues 143 to 163 (IIFLLFVSLFGLYGFFESYNP). Residues 225 to 229 (AGFDK) and Thr-249 contribute to the FMN site. Lys-229 serves as a coordination point for substrate. Substrate-binding positions include 274–278 (NSCGF) and Asn-342. An FMN-binding site is contributed by Asn-342. Ser-345 acts as the Nucleophile in catalysis. Asn-347 contributes to the substrate binding site. An FMN-binding site is contributed by Lys-429. Position 458-459 (458-459 (NT)) interacts with substrate. Residues 477 to 478 (SG), 505 to 507 (SGG), and 528 to 529 (YS) contribute to the FMN site.

The protein belongs to the dihydroorotate dehydrogenase family. Type 2 subfamily. As to quaternary structure, monomer. The cofactor is FMN.

It is found in the mitochondrion inner membrane. It carries out the reaction (S)-dihydroorotate + a quinone = orotate + a quinol. Its pathway is pyrimidine metabolism; UMP biosynthesis via de novo pathway; orotate from (S)-dihydroorotate (quinone route): step 1/1. Its function is as follows. Catalyzes the conversion of dihydroorotate to orotate with quinone as electron acceptor. The chain is Dihydroorotate dehydrogenase (quinone), mitochondrial from Plasmodium falciparum (isolate 3D7).